We begin with the raw amino-acid sequence, 292 residues long: Keratin-associated protein 10-9 (292 aa).

Repeat copies occupy residues 26–30, 31–35, 36–40, 57–61, 79–83, 99–103, 104–108, 109–113, 114–118, 120–124, 130–134, 140–144, 145–149, 150–154, 162–166, 172–176, 182–186, 187–191, 192–196, 197–201, 209–213, 219–223, 224–228, 243–247, and 250–254. Residues 26 to 254 are 25 X 5 AA repeats of C-C-X(3); sequence CCEPPCCATS…VPVSSCCAPT (229 aa).

It belongs to the KRTAP type 10 family. As to quaternary structure, interacts with hair keratins. Restricted to a narrow region of the hair fiber cuticle, lying approximately 20 cell layers above the apex of the dermal papilla of the hair root; not detected in any other tissues.

Functionally, in the hair cortex, hair keratin intermediate filaments are embedded in an interfilamentous matrix, consisting of hair keratin-associated proteins (KRTAP), which are essential for the formation of a rigid and resistant hair shaft through their extensive disulfide bond cross-linking with abundant cysteine residues of hair keratins. The matrix proteins include the high-sulfur and high-glycine-tyrosine keratins. This chain is Keratin-associated protein 10-9 (KRTAP10-9), found in Homo sapiens (Human).